A 72-amino-acid chain; its full sequence is Translation initiation factor IF-1 (72 aa).

Positions 1–72 (MSKQDVIELE…SRGRITWRKK (72 aa)) constitute an S1-like domain.

This sequence belongs to the IF-1 family. As to quaternary structure, component of the 30S ribosomal translation pre-initiation complex which assembles on the 30S ribosome in the order IF-2 and IF-3, IF-1 and N-formylmethionyl-tRNA(fMet); mRNA recruitment can occur at any time during PIC assembly.

The protein localises to the cytoplasm. Functionally, one of the essential components for the initiation of protein synthesis. Stabilizes the binding of IF-2 and IF-3 on the 30S subunit to which N-formylmethionyl-tRNA(fMet) subsequently binds. Helps modulate mRNA selection, yielding the 30S pre-initiation complex (PIC). Upon addition of the 50S ribosomal subunit IF-1, IF-2 and IF-3 are released leaving the mature 70S translation initiation complex. In Alkaliphilus oremlandii (strain OhILAs) (Clostridium oremlandii (strain OhILAs)), this protein is Translation initiation factor IF-1.